The following is a 353-amino-acid chain: ATP-dependent kinase YFH7 (353 aa).

31-39 (GSPGSGKST) contributes to the ATP binding site.

The protein belongs to the YFH7 family.

Functionally, ATP-dependent kinase that could be involved in endoplasmic reticulum membrane assembly. The sequence is that of ATP-dependent kinase YFH7 (YFH7) from Saccharomyces cerevisiae (strain RM11-1a) (Baker's yeast).